The primary structure comprises 637 residues: 1-deoxy-D-xylulose-5-phosphate synthase (637 aa).

Residues His76 and 117-119 (GHS) contribute to the thiamine diphosphate site. Residue Asp148 participates in Mg(2+) binding. Thiamine diphosphate is bound by residues 149–150 (GA), Asn177, Tyr294, and Glu381. Asn177 is a binding site for Mg(2+).

The protein belongs to the transketolase family. DXPS subfamily. In terms of assembly, homodimer. Requires Mg(2+) as cofactor. It depends on thiamine diphosphate as a cofactor.

The catalysed reaction is D-glyceraldehyde 3-phosphate + pyruvate + H(+) = 1-deoxy-D-xylulose 5-phosphate + CO2. The protein operates within metabolic intermediate biosynthesis; 1-deoxy-D-xylulose 5-phosphate biosynthesis; 1-deoxy-D-xylulose 5-phosphate from D-glyceraldehyde 3-phosphate and pyruvate: step 1/1. Functionally, catalyzes the acyloin condensation reaction between C atoms 2 and 3 of pyruvate and glyceraldehyde 3-phosphate to yield 1-deoxy-D-xylulose-5-phosphate (DXP). The protein is 1-deoxy-D-xylulose-5-phosphate synthase of Neisseria meningitidis serogroup C / serotype 2a (strain ATCC 700532 / DSM 15464 / FAM18).